A 130-amino-acid chain; its full sequence is Small ribosomal subunit protein uS11 (130 aa).

It belongs to the universal ribosomal protein uS11 family. Part of the 30S ribosomal subunit. Interacts with proteins S7 and S18. Binds to IF-3.

Its function is as follows. Located on the platform of the 30S subunit, it bridges several disparate RNA helices of the 16S rRNA. Forms part of the Shine-Dalgarno cleft in the 70S ribosome. In Xanthomonas campestris pv. campestris (strain B100), this protein is Small ribosomal subunit protein uS11.